The primary structure comprises 174 residues: Mating-type protein ALPHA2 (174 aa).

The homeobox; TALE-type DNA-binding region spans 108-170; the sequence is QPYRGHRFTK…NRRRKQKHPP (63 aa).

Belongs to the TALE/M-ATYP homeobox family. As to quaternary structure, forms a heterodimer with A1.

It is found in the nucleus. Its function is as follows. Mating type proteins are sequence specific DNA-binding proteins that act as master switches in yeast differentiation by controlling gene expression in a cell type-specific fashion. Transcriptional corepressor that acts in conjunction with A1 to repress transcription of haploid-specific genes and of MATALPHA1. This is Mating-type protein ALPHA2 (MATALPHA2) from Nakaseomyces delphensis (Yeast).